The primary structure comprises 130 residues: Small ribosomal subunit protein uS9 (130 aa).

Residues 98–130 (LKRAGLLTRDPRMKERKKPGLKKARRSPQFSKR) form a disordered region. Basic residues predominate over residues 111-130 (KERKKPGLKKARRSPQFSKR).

This sequence belongs to the universal ribosomal protein uS9 family.

This Staphylococcus saprophyticus subsp. saprophyticus (strain ATCC 15305 / DSM 20229 / NCIMB 8711 / NCTC 7292 / S-41) protein is Small ribosomal subunit protein uS9.